A 353-amino-acid chain; its full sequence is tRNA N6-adenosine threonylcarbamoyltransferase (353 aa).

His111 and His115 together coordinate Fe cation. Residues Leu134–Gly138, Asp167, Gly180, Asp184, and Asn279 contribute to the substrate site. A Fe cation-binding site is contributed by Asp307.

It belongs to the KAE1 / TsaD family. It depends on Fe(2+) as a cofactor.

The protein resides in the cytoplasm. It catalyses the reaction L-threonylcarbamoyladenylate + adenosine(37) in tRNA = N(6)-L-threonylcarbamoyladenosine(37) in tRNA + AMP + H(+). Functionally, required for the formation of a threonylcarbamoyl group on adenosine at position 37 (t(6)A37) in tRNAs that read codons beginning with adenine. Is involved in the transfer of the threonylcarbamoyl moiety of threonylcarbamoyl-AMP (TC-AMP) to the N6 group of A37, together with TsaE and TsaB. TsaD likely plays a direct catalytic role in this reaction. This is tRNA N6-adenosine threonylcarbamoyltransferase from Thermosynechococcus vestitus (strain NIES-2133 / IAM M-273 / BP-1).